Consider the following 387-residue polypeptide: O-methyltransferase lepI (387 aa).

Position 135–148 (135–148 (FENLWPVLMALPDF)) interacts with substrate. The tract at residues 175-195 (CFHWLATQPTRIANFKVLLTD) is substrate binding. S-adenosyl-L-methionine contacts are provided by residues 227–228 (GG), aspartate 252, 275–276 (NF), and arginine 291.

The protein belongs to the class I-like SAM-binding methyltransferase superfamily. Cation-independent O-methyltransferase family.

In terms of biological role, O-methyltransferase; part of the gene cluster 23 that mediates the biosynthesis of a family of 2-pyridones known as leporins. The hybrid PKS-NRPS synthetase lepA and the enoyl reductase lepG are responsible for fusion of phenylalanine with a hexaketide and subsequent release of the stable tetramic acid precursor, pre-leporin C. Because lepA lacks a designated enoylreductase (ER) domain, the required activity is provided the enoyl reductase lepG. It is possible that the dehydrogenase lepF also participates in production of pre-leporin C. Cytochrome P450 monooxygenase lepH is then required for the ring expansion step to yield leporin C. Leporin C is then presumably further oxidized by the N-hydroxylase lepD to form leporin B. LepI may possess a function in biosynthesis upstream of lepA. Leporin B is further oxidized in the presence of ferric ion to give the leporin B trimer-iron chelate, but whether or not this reaction is catalyzed by an enzyme in the pathway or by ferric ion is not determined yet. The sequence is that of O-methyltransferase lepI from Aspergillus flavus (strain ATCC 200026 / FGSC A1120 / IAM 13836 / NRRL 3357 / JCM 12722 / SRRC 167).